The chain runs to 277 residues: Carbonyl reductase [NADPH] 1 (277 aa).

Residue serine 2 is modified to N-acetylserine. Phosphoserine is present on residues serine 2 and serine 30. Residues 10–34 (VTGG…GDVV), 63–64 (DI), and asparagine 90 contribute to the NADP(+) site. Glutathione contacts are provided by residues 95-97 (FKV) and glutamine 106. A substrate-binding site is contributed by serine 140. 193 to 194 (AY) contributes to the glutathione binding site. Tyrosine 194 functions as the Proton acceptor in the catalytic mechanism. Residues 194-198 (YGVTK) and 231-233 (VRT) contribute to the NADP(+) site. N6-1-carboxyethyl lysine is present on lysine 239.

It belongs to the short-chain dehydrogenases/reductases (SDR) family. As to quaternary structure, monomer.

Its subcellular location is the cytoplasm. The enzyme catalyses a secondary alcohol + NADP(+) = a ketone + NADPH + H(+). It catalyses the reaction prostaglandin F2alpha + NADP(+) = prostaglandin E2 + NADPH + H(+). It carries out the reaction prostaglandin E1 + NADP(+) = 15-oxoprostaglandin E1 + NADPH + H(+). The catalysed reaction is menadione + NADPH + H(+) = menadiol + NADP(+). The enzyme catalyses prostaglandin D2 + NADP(+) = 15-oxoprostaglandin D2 + NADPH + H(+). It catalyses the reaction prostaglandin E2 + NADP(+) = 15-oxoprostaglandin E2 + NADPH + H(+). It carries out the reaction prostaglandin F2alpha + NADP(+) = 15-oxoprostaglandin F2alpha + NADPH + H(+). The catalysed reaction is daunorubicin + NADPH + H(+) = 13-dihydrodaunorubicin + NADP(+). The enzyme catalyses S-nitrosoglutathione + NADPH + H(+) = S-(hydroxysulfenamide)glutathione + NADP(+). It catalyses the reaction a primary alcohol + NADP(+) = an aldehyde + NADPH + H(+). It carries out the reaction cortisol + NADPH + H(+) = 20beta-dihydrocortisol + NADP(+). The catalysed reaction is corticosterone + NADPH + H(+) = 20beta-dihydrocorticosterone + NADP(+). Functionally, NADPH-dependent reductase with broad substrate specificity. Catalyzes the reduction of a wide variety of carbonyl compounds including quinones, prostaglandins, menadione, plus various xenobiotics. Catalyzes the reduction of the antitumor anthracyclines doxorubicin and daunorubicin to the cardiotoxic compounds doxorubicinol and daunorubicinol. Can convert prostaglandin E to prostaglandin F2-alpha. Can bind glutathione, which explains its higher affinity for glutathione-conjugated substrates. Catalyzes the reduction of S-nitrosoglutathione. In addition, participates in the glucocorticoid metabolism by catalyzing the NADPH-dependent cortisol/corticosterone into 20beta-dihydrocortisol (20b-DHF) or 20beta-corticosterone (20b-DHB), which are weak agonists of NR3C1 and NR3C2 in adipose tissue. This is Carbonyl reductase [NADPH] 1 from Pongo abelii (Sumatran orangutan).